Consider the following 305-residue polypeptide: tRNA pseudouridine synthase B (305 aa).

Catalysis depends on Asp41, which acts as the Nucleophile.

Belongs to the pseudouridine synthase TruB family. Type 1 subfamily.

The catalysed reaction is uridine(55) in tRNA = pseudouridine(55) in tRNA. Its function is as follows. Responsible for synthesis of pseudouridine from uracil-55 in the psi GC loop of transfer RNAs. This chain is tRNA pseudouridine synthase B, found in Prochlorococcus marinus subsp. pastoris (strain CCMP1986 / NIES-2087 / MED4).